The chain runs to 481 residues: MAAAPGGSAQPAGPGPRLGFSTADSGVGMSGLNPGPAVPMKDHDAIKLFVGQIPRGLDEQDLKPLFEEFGRIYELTVLKDRLTGLHKGCAFLTYCARDSALKAQSALHEQKTLPGMNRPIQVKPAASEGRGEDRKLFVGMLGKQQGEEDVRRLFQPFGHIEECTVLRSPDGTSKGCAFVKFGSQGEAQAAIRGLHGSRTMAGASSSLVVKLADTDRERALRRMQQMAGHLGAFHPAPLPLGACGAYTTAILQHQAALLAAAQGPGLGPVAAVAAQMQHVAAFSLVAAPLLPAAAANSPPGSGPGTLPGLPAPIGVNGFGPLTPQTNGQPGSDTLYNNGLSPYPAQSPGVADPLQQAYAGMHHYAAAYPSAYAPVSTAFPQQPSALPQQQREGPEGCNLFIYHLPQEFGDAELIQTFLPFGAVVSAKVFVDRATNQSKCFGFVSFDNPTSAQTAIQAMNGFQIGMKRLKVQLKRPKDANRPY.

The span at 1–12 (MAAAPGGSAQPA) shows a compositional bias: low complexity. A disordered region spans residues 1 to 34 (MAAAPGGSAQPAGPGPRLGFSTADSGVGMSGLNP). RRM domains follow at residues 46–127 (IKLF…PAAS), 134–214 (RKLF…LADT), and 396–474 (CNLF…LKRP).

The protein belongs to the CELF/BRUNOL family. In terms of tissue distribution, expressed mainly in kidney, brain and testis and present in other tissues albeit at lower levels. Also expressed in fetal kidney.

It is found in the nucleus. Its subcellular location is the cytoplasm. In terms of biological role, RNA-binding protein implicated in the regulation of pre-mRNA alternative splicing. Mediates exon inclusion and/or exclusion in pre-mRNA that are subject to tissue-specific and developmentally regulated alternative splicing. Specifically activates exon 5 inclusion of TNNT2 in a muscle-specific splicing enhancer (MSE)-dependent manner. Promotes also exon exclusion of INSR pre-mRNA. The polypeptide is CUGBP Elav-like family member 6 (CELF6) (Homo sapiens (Human)).